Reading from the N-terminus, the 374-residue chain is Putative phosphoserine aminotransferase (374 aa).

Position 48 (arginine 48) interacts with L-glutamate. Pyridoxal 5'-phosphate-binding positions include 82-83 (AT), phenylalanine 106, threonine 152, aspartate 174, and glutamine 197. Lysine 198 is subject to N6-(pyridoxal phosphate)lysine. 249 to 250 (NT) contributes to the pyridoxal 5'-phosphate binding site.

Belongs to the class-V pyridoxal-phosphate-dependent aminotransferase family. SerC subfamily. In terms of assembly, homodimer. Pyridoxal 5'-phosphate is required as a cofactor.

It localises to the cytoplasm. It catalyses the reaction O-phospho-L-serine + 2-oxoglutarate = 3-phosphooxypyruvate + L-glutamate. The catalysed reaction is 4-(phosphooxy)-L-threonine + 2-oxoglutarate = (R)-3-hydroxy-2-oxo-4-phosphooxybutanoate + L-glutamate. Its pathway is amino-acid biosynthesis; L-serine biosynthesis; L-serine from 3-phospho-D-glycerate: step 2/3. It participates in cofactor biosynthesis; pyridoxine 5'-phosphate biosynthesis; pyridoxine 5'-phosphate from D-erythrose 4-phosphate: step 3/5. Functionally, catalyzes the reversible conversion of 3-phosphohydroxypyruvate to phosphoserine and of 3-hydroxy-2-oxo-4-phosphonooxybutanoate to phosphohydroxythreonine. In Mycolicibacterium paratuberculosis (strain ATCC BAA-968 / K-10) (Mycobacterium paratuberculosis), this protein is Putative phosphoserine aminotransferase.